The following is a 321-amino-acid chain: Phospho-N-acetylmuramoyl-pentapeptide-transferase (321 aa).

The next 10 helical transmembrane spans lie at 1 to 21 (MIFVYALLALVITFVLVPVLI), 50 to 70 (MGGLTFLLSIVITSLVAIIFV), 76 to 96 (IILLLFVTIGFGLIGFIDDYI), 112 to 132 (FLAQIGIAIIFFVLSNVFHLV), 140 to 160 (IPFTNVAIPLSFAYVIFIVFW), 176 to 196 (GLATGLSIIGFTMYAIMSFVL), 200 to 220 (AIGIFCIIMLFALLGFLPYNI), 225 to 245 (VFMGDTGSLALGGIFATISIM), 250 to 270 (LSLIFIGLVFVIETLSVMLQV), and 300 to 320 (VVTVFWAVGLISGLIGLWIGV).

It belongs to the glycosyltransferase 4 family. MraY subfamily. It depends on Mg(2+) as a cofactor.

The protein localises to the cell membrane. It carries out the reaction UDP-N-acetyl-alpha-D-muramoyl-L-alanyl-gamma-D-glutamyl-L-lysyl-D-alanyl-D-alanine + di-trans,octa-cis-undecaprenyl phosphate = Mur2Ac(oyl-L-Ala-gamma-D-Glu-L-Lys-D-Ala-D-Ala)-di-trans,octa-cis-undecaprenyl diphosphate + UMP. It functions in the pathway cell wall biogenesis; peptidoglycan biosynthesis. Catalyzes the initial step of the lipid cycle reactions in the biosynthesis of the cell wall peptidoglycan: transfers peptidoglycan precursor phospho-MurNAc-pentapeptide from UDP-MurNAc-pentapeptide onto the lipid carrier undecaprenyl phosphate, yielding undecaprenyl-pyrophosphoryl-MurNAc-pentapeptide, known as lipid I. This chain is Phospho-N-acetylmuramoyl-pentapeptide-transferase, found in Staphylococcus aureus (strain Mu50 / ATCC 700699).